The chain runs to 484 residues: Threonine synthase-like 2 (484 aa).

Lysine 113 carries the post-translational modification N6-(pyridoxal phosphate)lysine.

It belongs to the threonine synthase family. It depends on pyridoxal 5'-phosphate as a cofactor.

Functionally, acts as a catabolic phospho-lyase on both gamma- and beta-phosphorylated substrates. Degrades O-phospho-threonine (PThr) to alpha-ketobutyrate, ammonia and phosphate. In Pongo abelii (Sumatran orangutan), this protein is Threonine synthase-like 2 (THNSL2).